A 215-amino-acid chain; its full sequence is Small ribosomal subunit protein uS7 (215 aa).

It belongs to the universal ribosomal protein uS7 family. As to quaternary structure, part of the 30S ribosomal subunit.

One of the primary rRNA binding proteins, it binds directly to 16S rRNA where it nucleates assembly of the head domain of the 30S subunit. Is located at the subunit interface close to the decoding center. In Thermococcus onnurineus (strain NA1), this protein is Small ribosomal subunit protein uS7.